We begin with the raw amino-acid sequence, 488 residues long: Surface lipoprotein assembly modifier 1 (488 aa).

Positions 1 to 31 (MVIFYFCGKTFMPARNRWMLLLPLLASAAYA) are cleaved as a signal peptide. The interval 32–202 (EETPREPDLR…LYRKALRERD (171 aa)) is N-terminal domain. TPR repeat units lie at residues 118–151 (MLAL…QPDA) and 171–204 (AADQ…RDAW). The C-terminal probable beta barrel, partially restores export of lipoproteins stretch occupies residues 203–488 (AWKVNGGFSV…RAFVEFNKTF (286 aa)). Transmembrane regions (beta stranded) follow at residues 204 to 214 (WKVNGGFSVTR), 241 to 252 (VNYRLGAEKKWS), 257 to 267 (WYTTAGGDVSG), 280 to 291 (TAGVSGGIGFAD), 294 to 304 (KDAGLAVFHER), 316 to 325 (NGARLYFNRW), 330 to 340 (WQTLSSAEWGR), 354 to 364 (LQISNSLVFYR), 368 to 377 (QYWMGGLDFY), 393 to 402 (GLRFAWGQEW), 407 to 417 (LSSLLRLGAAK), 439 to 448 (LNTSLSLWHR), 455 to 464 (ITPRLTLSHR), and 478 to 488 (NRAFVEFNKTF).

This sequence belongs to the Slam family. Interacts with the C-terminal domain of surface lipoprotein TbpB.

The protein resides in the cell outer membrane. Its function is as follows. Required for correct export to the cell surface of some cell outer membrane lipoproteins both in Neisseria and heterologously in E.coli. This Neisseria meningitidis serogroup B (strain ATCC BAA-335 / MC58) protein is Surface lipoprotein assembly modifier 1.